Here is a 67-residue protein sequence, read N- to C-terminus: Large ribosomal subunit protein bL31 (67 aa).

Residues C16, C18, C36, and C39 each contribute to the Zn(2+) site.

Belongs to the bacterial ribosomal protein bL31 family. Type A subfamily. In terms of assembly, part of the 50S ribosomal subunit. It depends on Zn(2+) as a cofactor.

Binds the 23S rRNA. The polypeptide is Large ribosomal subunit protein bL31 (Treponema denticola (strain ATCC 35405 / DSM 14222 / CIP 103919 / JCM 8153 / KCTC 15104)).